The following is a 427-amino-acid chain: Caspase recruitment domain-containing protein 8 (427 aa).

The interval 1–23 is disordered; the sequence is MGIPTSSVSEEQESSEGQDSGDI. Residues 51 to 186 form a ZU5 region; it reads FLGPEGNVDV…FYAVLEKPSF (136 aa). The FIIND domain maps to 51 to 336; the sequence is FLGPEGNVDV…IQLGAASAPP (286 aa). The segment at 187–336 is UPA; the sequence is SLMGILLRIA…IQLGAASAPP (150 aa). Positions 336-426 constitute a CARD domain; sequence PAFSGAAFVK…YLVSYLRQQS (91 aa).

Interacts with DPP9; leading to inhibit activation of the inflammasome. DPP9 acts via formation of a ternary complex, composed of a DPP9 homodimer, one full-length CARD8 protein, and one cleaved C-terminus of CARD8 (Caspase recruitment domain-containing protein 8, C-terminus). Interacts with DPP8; leading to inhibit activation of the inflammasome, probably via formation of a ternary complex with DPP8. Interacts with NLRP3. Interacts with IKBKG/NEMO. Interacts with DRAL. Binds to caspase-1 (CASP1), CARD16/pseudo-ICE and CARD18/ICEBERG. Interacts with NLRP2 (via NACHT domain). In terms of assembly, interacts with the C-terminal part of CARD8 (Caspase recruitment domain-containing protein 8, C-terminus) in absence of pathogens and other damage-associated signals. As to quaternary structure, interacts with the N-terminal part of CARD8 (Caspase recruitment domain-containing protein 8, N-terminus) in absence of pathogens and other damage-associated signals. Homomultimer; forms the CARD8 inflammasome polymeric complex, a filament composed of homopolymers of this form in response to pathogens and other damage-associated signals. The CARD8 inflammasome polymeric complex directly recruits pro-caspase-1 (proCASP1) independently of PYCARD/ASC. Interacts (via CARD domain) with CASP1 (via CARD domain); leading to CASP1 activation. In terms of processing, undergoes autocatalytic processing within the FIIND domain to generate the N-terminal and C-terminal parts, which are associated non-covalently in absence of pathogens and other damage-associated signals. Ubiquitinated by the N-end rule pathway in response to pathogens and other damage-associated signals, leading to its degradation by the proteasome and subsequent release of the cleaved C-terminal part of the protein (Caspase recruitment domain-containing protein 8, C-terminus), which polymerizes and forms the CARD8 inflammasome.

It is found in the cytoplasm. The protein localises to the nucleus. The protein resides in the inflammasome. Its activity is regulated as follows. CARD8 inflammasome is inhibited by DPP8 and DPP9, which sequester the C-terminal fragment of CARD8 (Caspase recruitment domain-containing protein 8, C-terminus) in a ternary complex, thereby preventing CARD8 oligomerization and activation. CARD8 inflammasome is activated by Val-boroPro (Talabostat, PT-100), an inhibitor of dipeptidyl peptidases DPP8 and DPP9. Val-boroPro relieves inhibition of DPP8 and/or DPP9 by inducing the proteasome-mediated destruction of the N-terminal part of CARD8, releasing its C-terminal part from autoinhibition. Inflammasome sensor, which mediates inflammasome activation in response to various pathogen-associated signals, leading to subsequent pyroptosis of CD4(+) T-cells and macrophages. Inflammasomes are supramolecular complexes that assemble in the cytosol in response to pathogens and other damage-associated signals and play critical roles in innate immunity and inflammation. Acts as a recognition receptor (PRR): recognizes specific pathogens and other damage-associated signals, such as Val-boroPro inhibitor, and mediates CARD8 inflammasome activation. In response to pathogen-associated signals, the N-terminal part of CARD8 is degraded by the proteasome, releasing the cleaved C-terminal part of the protein (Caspase recruitment domain-containing protein 8, C-terminus), which polymerizes to initiate the formation of the inflammasome complex: the CARD8 inflammasome directly recruits pro-caspase-1 (proCASP1) independently of PYCARD/ASC and promotes caspase-1 (CASP1) activation, which subsequently cleaves and activates inflammatory cytokines IL1B and IL18 and gasdermin-D (GSDMD), leading to pyroptosis. Also acts as a negative regulator of the NLRP3 inflammasome. May also act as an inhibitor of NF-kappa-B activation. Functionally, constitutes the precursor of the CARD8 inflammasome, which mediates autoproteolytic processing within the FIIND domain to generate the N-terminal and C-terminal parts, which are associated non-covalently in absence of pathogens and other damage-associated signals. Its function is as follows. Regulatory part that prevents formation of the CARD8 inflammasome: in absence of pathogens and other damage-associated signals, interacts with the C-terminal part of CARD8 (Caspase recruitment domain-containing protein 8, C-terminus), preventing activation of the CARD8 inflammasome. In response to pathogen-associated signals, this part is ubiquitinated by the N-end rule pathway and degraded by the proteasome, releasing the cleaved C-terminal part of the protein, which polymerizes and forms the CARD8 inflammasome. In terms of biological role, constitutes the active part of the CARD8 inflammasome. In absence of pathogens and other damage-associated signals, interacts with the N-terminal part of CARD8 (Caspase recruitment domain-containing protein 8, N-terminus), preventing activation of the CARD8 inflammasome. In response to pathogen-associated signals, the N-terminal part of CARD8 is degraded by the proteasome, releasing this form, which polymerizes to form the CARD8 inflammasome complex: the CARD8 inflammasome complex then directly recruits pro-caspase-1 (proCASP1) and promotes caspase-1 (CASP1) activation, leading to gasdermin-D (GSDMD) cleavage and subsequent pyroptosis. The sequence is that of Caspase recruitment domain-containing protein 8 from Pongo abelii (Sumatran orangutan).